Consider the following 199-residue polypeptide: Putative peroxiredoxin ycf42 (199 aa).

Residues 8–165 (LRVGQLAPDF…TLRVLQAIQY (158 aa)) enclose the Thioredoxin domain. Residue cysteine 53 is the Cysteine sulfenic acid (-SOH) intermediate of the active site.

Belongs to the peroxiredoxin family. AhpC/Prx1 subfamily. As to quaternary structure, homodimer; disulfide-linked, upon oxidation. The Cys-53-SH group is the primary site of oxidation by H(2)O(2), and the oxidized Cys-53 (probably Cys-SOH) rapidly reacts with Cys-174-SH of the other subunit to form an intermolecular disulfide. This disulfide is subsequently reduced by thioredoxin.

Its subcellular location is the plastid. The protein localises to the chloroplast. The catalysed reaction is a hydroperoxide + [thioredoxin]-dithiol = an alcohol + [thioredoxin]-disulfide + H2O. Functionally, thiol-specific peroxidase that catalyzes the reduction of hydrogen peroxide and organic hydroperoxides to water and alcohols, respectively. Plays a role in cell protection against oxidative stress by detoxifying peroxides. The protein is Putative peroxiredoxin ycf42 (ycf42) of Pyropia yezoensis (Susabi-nori).